The chain runs to 104 residues: L-rhamnose mutarotase (104 aa).

Tyr-18 lines the substrate pocket. The active-site Proton donor is His-22. Substrate-binding positions include Tyr-41 and 76–77 (WW).

It belongs to the rhamnose mutarotase family. In terms of assembly, homodimer.

It localises to the cytoplasm. The catalysed reaction is alpha-L-rhamnose = beta-L-rhamnose. It participates in carbohydrate metabolism; L-rhamnose metabolism. Functionally, involved in the anomeric conversion of L-rhamnose. The chain is L-rhamnose mutarotase from Bacillus subtilis (strain 168).